The chain runs to 2006 residues: E3 ubiquitin-protein ligase PRT6 (2006 aa).

Residues 119–189 form a UBR-type zinc finger; the sequence is GVCGSVWGQN…PDGFCSNHKG (71 aa). Disordered stretches follow at residues 1167–1186 and 1338–1380; these read LSSS…SDSV and DHQP…AGSD. Residues 1338 to 1348 show a composition bias toward basic and acidic residues; sequence DHQPHEAENCS. Over residues 1349–1360 the composition is skewed to polar residues; it reads EKNSVGGPSTLQ. A compositionally biased stretch (basic and acidic residues) spans 1364-1377; it reads PDIRSRQTSRRPDA. The segment at 1395–1440 adopts an RING-type; degenerate zinc-finger fold; sequence CGHAVHQSCLERYLKSLKERSGRRTVFEGAHIVDLKKKEFLCPVCR.

This sequence belongs to the E3 ubiquitin-protein ligase UBR1-like family.

The catalysed reaction is S-ubiquitinyl-[E2 ubiquitin-conjugating enzyme]-L-cysteine + [acceptor protein]-L-lysine = [E2 ubiquitin-conjugating enzyme]-L-cysteine + N(6)-ubiquitinyl-[acceptor protein]-L-lysine.. Its pathway is protein modification; protein ubiquitination. In terms of biological role, ubiquitin protein ligase which is a component of the N-end rule pathway with arginine specificity, and functions with the arginyltransferases ATE1 and ATE2. Recognizes and binds to proteins bearing specific N-terminal residues that are destabilizing according to the N-end rule, leading to their ubiquitination and subsequent degradation. Does not participate in degradation of proteins with N-terminal Phe or Leu. The N-end rule pathway regulates seed after-ripening, seedling sugar sensitivity, seedling lipid breakdown, and abscisic acid (ABA) sensitivity of germination. The N-end rule pathway regulates various aspects of leaf and shoot development. Involved in the ubiquitination and subsequent degradation of RAP2-12, an activator of hypoxic gene expression. The ubiquitination occurs after the N-arginylation of RAP2-12 by ATE1 or ATE2 under aerobic conditions. The end-rule pathway plays a role in regulating the timing and amplitude of the immune response following infection with the bacterial pathogen Pseudomonas syringae pv tomato. Regulates the biosynthesis of plant-defense metabolites such as glucosinolates, and the biosynthesis and response to the phytohormone jasmonate (JA), which plays a key role in plant immunity. Controls the expression of specific defense-response genes, activates the synthesis pathway for the phytoalexin camalexin, and influences basal resistance to the hemibiotroph pathogen Pseudomonas syringae pv tomato. Coordinates the mobilization of seed storage reserves and regulates the abundance and activities of several proteases following seed germination. The polypeptide is E3 ubiquitin-protein ligase PRT6 (Arabidopsis thaliana (Mouse-ear cress)).